A 279-amino-acid chain; its full sequence is Large ribosomal subunit protein uL2 (279 aa).

2 disordered regions span residues 34–58 (LRPL…GGGH) and 225–279 (VMNP…KNKR). Positions 251–268 (GKPEGRTRRPNKESDKLI) are enriched in basic and acidic residues. Basic residues predominate over residues 269–279 (VRRRRTGKNKR).

It belongs to the universal ribosomal protein uL2 family. As to quaternary structure, part of the 50S ribosomal subunit. Forms a bridge to the 30S subunit in the 70S ribosome.

One of the primary rRNA binding proteins. Required for association of the 30S and 50S subunits to form the 70S ribosome, for tRNA binding and peptide bond formation. It has been suggested to have peptidyltransferase activity; this is somewhat controversial. Makes several contacts with the 16S rRNA in the 70S ribosome. This chain is Large ribosomal subunit protein uL2, found in Micrococcus luteus (strain ATCC 4698 / DSM 20030 / JCM 1464 / CCM 169 / CCUG 5858 / IAM 1056 / NBRC 3333 / NCIMB 9278 / NCTC 2665 / VKM Ac-2230) (Micrococcus lysodeikticus).